Consider the following 677-residue polypeptide: MGRHSKPDPEDSVDDLSDGHAAEQQHWEDISGSYDYPGVDQPDDGPLSSEGHYSAVGGYSASGSEDYPDIPPRPDWEPTGAEPIAAAPPPLFRFGHRGPGDWQAGHRSADGRRGVSIGVIVALVAVVVMVAGVILWRFFGDALSNRSHTAAARCVGGKDTVAVIADPSIADQVKESADSYNASAGPVGDRCVAVAVTSAGSDAVINGFIGKWPTELGGQPGLWIPSSSISAARLTGAAGSQAISDSRSLVISPVLLAVRPELQQALANQNWAALPGLQTNPNSLSGLDLPAWGSLRLAMPSSGNGDAAYLAGEAVAAASAPAGAPATAGIGAVRTLMGARPKLADDSLTAAMDTLLKPGDVATAPVHAVVTTEQQLFQRGQSLSDAENTLGSWLPPGPAAVADYPTVLLSGAWLSQEQTSAASAFARYLHKPEQLAKLARAGFRVSDVKPPSSPVTSFPALPSTLSVGDDSMRATLADTMVTASAGVAATIMLDQSMPNDEGGNSRLSNVVAALENRIKAMPPSSVVGLWTFDGREGRTEVPAGPLADPVNGQPRPAALTAALGKQYSSGGGAVSFTTLRLIYQEMLANYRVGQANSVLVITAGPHTDQTLDGPGLQDFIRKSADPAKPIAVNIIDFGADPDRATWEAVAQLSGGSYQNLETSASPDLATAVNIFLS.

The segment at 1 to 87 (MGRHSKPDPE…PTGAEPIAAA (87 aa)) is disordered. The segment covering 17 to 29 (SDGHAAEQQHWED) has biased composition (basic and acidic residues). Low complexity predominate over residues 51–64 (GHYSAVGGYSASGS). 4 consecutive transmembrane segments (helical) span residues 115-135 (VSIGVIVALVAVVVMVAGVIL), 192-212 (VAVAVTSAGSDAVINGFIGKW), 313-333 (EAVAAASAPAGAPATAGIGAV), and 474-494 (ATLADTMVTASAGVAATIMLD).

It localises to the cell membrane. This is an uncharacterized protein from Mycobacterium tuberculosis (strain CDC 1551 / Oshkosh).